The sequence spans 513 residues: Protein CYCLOPS (513 aa).

The tract at residues 327–435 (QIHGGTASGE…ERSRKMAEAK (109 aa)) is disordered. Over residues 334 to 347 (SGEPSQSESSAAAP) the composition is skewed to low complexity. The segment covering 359–381 (PSNSSQTLCDSSWKQVGESTQNR) has biased composition (polar residues). Basic and acidic residues predominate over residues 384-396 (GVREQIMDNLKDD). 2 short sequence motifs (nuclear localization signal) span residues 397–401 (RKRKR) and 421–424 (KKRR). Positions 447 to 513 (MQAVMKRCEN…ERLLSETGKI (67 aa)) form a coiled coil.

This sequence belongs to the CYCLOPS family.

The protein resides in the nucleus. Functionally, involved symbiotic signaling. Required for root infection by symbiotic rhizobia, infection thread (IT) formation, and nodule development. Required for symbiosome formation (i.e. the release of the bacteria from the ITs) and subsequent symbiosome development. Involved in arbuscular mycorrhizal (AM) symbiosis. The polypeptide is Protein CYCLOPS (Pisum sativum (Garden pea)).